The sequence spans 739 residues: tRNA 5-methylaminomethyl-2-thiouridine biosynthesis bifunctional protein MnmC (739 aa).

The tRNA (mnm(5)s(2)U34)-methyltransferase stretch occupies residues 1–282 (MDKVTPAKLS…KREMLTATKL (282 aa)). Residues 330–739 (IGAGVCGLMA…HRSSLKKPLS (410 aa)) are FAD-dependent cmnm(5)s(2)U34 oxidoreductase.

The protein in the N-terminal section; belongs to the methyltransferase superfamily. tRNA (mnm(5)s(2)U34)-methyltransferase family. This sequence in the C-terminal section; belongs to the DAO family. The cofactor is FAD.

It localises to the cytoplasm. It carries out the reaction 5-aminomethyl-2-thiouridine(34) in tRNA + S-adenosyl-L-methionine = 5-methylaminomethyl-2-thiouridine(34) in tRNA + S-adenosyl-L-homocysteine + H(+). Its function is as follows. Catalyzes the last two steps in the biosynthesis of 5-methylaminomethyl-2-thiouridine (mnm(5)s(2)U) at the wobble position (U34) in tRNA. Catalyzes the FAD-dependent demodification of cmnm(5)s(2)U34 to nm(5)s(2)U34, followed by the transfer of a methyl group from S-adenosyl-L-methionine to nm(5)s(2)U34, to form mnm(5)s(2)U34. In Psychrobacter sp. (strain PRwf-1), this protein is tRNA 5-methylaminomethyl-2-thiouridine biosynthesis bifunctional protein MnmC.